We begin with the raw amino-acid sequence, 187 residues long: Transmembrane protein 212 (187 aa).

The next 5 helical transmembrane spans lie at 11–31 (TLVTLGGLSIFSGAIAFFPVF), 42–62 (VWIACPIWNGALAVTAGSLVL), 76–96 (AVFTFVILSILGCPLHFTVAL), 106–126 (FYSFSGVAGTNYLGYVVTFPF), and 148–168 (LQVLDLCLSLILFCVSLAVFI).

Its subcellular location is the membrane. This Mus musculus (Mouse) protein is Transmembrane protein 212 (Tmem212).